A 213-amino-acid polypeptide reads, in one-letter code: Thymidylate kinase (213 aa).

Residue 10 to 17 (GLEGAGKT) coordinates ATP.

The protein belongs to the thymidylate kinase family.

The catalysed reaction is dTMP + ATP = dTDP + ADP. Phosphorylation of dTMP to form dTDP in both de novo and salvage pathways of dTTP synthesis. This is Thymidylate kinase from Escherichia coli O81 (strain ED1a).